The chain runs to 63 residues: Cecropin-A1 (63 aa).

An N-terminal signal peptide occupies residues 1–23; the sequence is MNFYNIFVFVALILAITIGQSEA. Arginine 62 carries the arginine amide modification.

The protein belongs to the cecropin family.

It localises to the secreted. Its function is as follows. Cecropins have lytic and antibacterial activity against several Gram-positive and Gram-negative bacteria. The sequence is that of Cecropin-A1 (CecA1) from Drosophila sechellia (Fruit fly).